Consider the following 564-residue polypeptide: MESEQPAAVKASAPIEEPQSTETAVELGKHSTLKADLSIDKLETATTEATNAVVEPVEMEQQVENELVNESTQAMTSTTTQEKVVGSVNNLVEEQQCVEMEFETSSDLVVQGSPSEESKKVASDASATVTAPQVQPAPHVDSSPQASGLSLLAAYSSDDSDDEKVTPVQNGDNDVIEVPVTDPASSTTAYRPVVAVSSDDESSKSSSSSSDSDSDSEGEYLTVLRKKIDKRINTVDCDEDDEDFDEDGATGDRSRRRQPPKVRGEMLLDDLPPIHQLEITVPEDECVELGKVQSIVDQLVLVSVLPNSMLFDLDTVLFLEKGRKVLGEVFDVLGQVSDPLYCVRFNSNKQILDRGIKIGDVVYCAPKTEHTQFVILSKLMQVRGSDASWEHDVEPPARYVDHSDDEEEREARAEQRKRRQRDRTNSTDSVDTVTSVATTATKASSVAPPPRQRGRRGQRESFRQSQRPSINQHNQNQPQDEQYNFHPSYNPGSWHSNYYQNYHQAAANFNMAQQHPGMPFPVPNYGYGMPYAMPPMYPHMYPPPPPFAPPPPNNQSHQGQPPPS.

Disordered stretches follow at residues 1 to 29 (MESE…ELGK), 108 to 218 (LVVQ…DSEG), 238 to 264 (DEDD…KVRG), 387 to 489 (ASWE…HPSY), and 538 to 564 (PHMY…PPPS). Over residues 146-157 (ASGLSLLAAYSS) the composition is skewed to low complexity. Positions 238 to 249 (DEDDEDFDEDGA) are enriched in acidic residues. Thr250 is subject to Phosphothreonine. Phosphoserine is present on Ser254. Positions 388–402 (SWEHDVEPPARYVDH) are enriched in basic and acidic residues. Ser403 is modified (phosphoserine). Positions 426-446 (STDSVDTVTSVATTATKASSV) are enriched in low complexity. Thr427 bears the Phosphothreonine mark. Phosphoserine is present on Ser429. Thr432 is modified (phosphothreonine). Over residues 468-489 (PSINQHNQNQPQDEQYNFHPSY) the composition is skewed to polar residues. Over residues 538 to 553 (PHMYPPPPPFAPPPPN) the composition is skewed to pro residues. Over residues 554–564 (NQSHQGQPPPS) the composition is skewed to polar residues.

It belongs to the NAF1 family. In terms of assembly, during assembly of the complex, component of the box H/ACA small nucleolar ribonucleoprotein (H/ACA snoRNP) complex.

The protein localises to the nucleus. Functionally, RNA-binding protein required for the maturation of the box H/ACA small nucleolar ribonucleoprotein (H/ACA snoRNP) complex and ribosome biogenesis. During assembly of the H/ACA snoRNP complex it associates with the complex and dissociates during complex maturation, becoming replaced by Gar1 to yield mature H/ACA snoRNP complex. The sequence is that of H/ACA ribonucleoprotein complex non-core subunit NAF1 from Drosophila melanogaster (Fruit fly).